The chain runs to 398 residues: Cytochrome b561 and DOMON domain-containing protein At3g61750 (398 aa).

An N-terminal signal peptide occupies residues 1–23 (MKTLVGFYILCFLIGQDLPFLAA). The DOMON domain maps to 64 to 177 (NTFVLRYSEN…PRRAVILAFS (114 aa)). The Cytochrome b561 domain occupies 184-377 (LGRLTKHDDK…LEIFRIRGTI (194 aa)). His220 lines the heme b pocket. 2 consecutive transmembrane segments (helical) span residues 222–242 (VMAILGWGFLLPVGAILARYL) and 252–272 (LHIGFQFTGFIFGLAAVILGI). The heme b site is built by His253 and His285. The next 3 membrane-spanning stretches (helical) occupy residues 287–307 (GIGIFLLVLSTLQVLAFFARP), 320–340 (YHHWIGRISLFFGAVNIVLGI), and 351–371 (KIGYGFVLSVTLLAFVVLEIF). His321 contributes to the heme b binding site.

The cofactor is heme b.

The protein localises to the membrane. In terms of biological role, may act as a catecholamine-responsive trans-membrane electron transporter. This Arabidopsis thaliana (Mouse-ear cress) protein is Cytochrome b561 and DOMON domain-containing protein At3g61750.